The primary structure comprises 111 residues: MIRKNKWLRFQTVCRYIPLSLKNHNRLVIFVCQRIEWRYIFSTNTGHPLKNTCEMTGTDFSTDGLMRRYVTGGNNQWHTVASLHMTIMMNRIGTVADRQPKARKVKHGEMT.

This is an uncharacterized protein from Escherichia coli (strain K12).